A 383-amino-acid chain; its full sequence is MLISNTYNQHFPQLTQEQLARNATKKVICGMSGGVDSSVSAFILQQQGYQVEGLFMKNWEEDDDTDYCTAAADLADAQAVCDKLGIKLHKINFAAEYWDNVFEHFLTEYKAGRTPNPDILCNKEIKFKAFLEYAAEDLGADYIATGHYVRRAGDNENAKLLRGLDANKDQSYFLYTLSHKQVGQSLFPVGEIEKPIVRAIAEDLGLITAKKKDSTGICFIGERKFKDFLARYLPAQPGNIRTVDDEIIGRHDGLMYHTLGQRKGLGIGGLKNAGDEAWYVVDKDVENNELIVAQGHDHPRLFSKGLIASQLHWVDREPIRESLRCTVKTRYRQQDIPCVIEPIDDETIRVIFDEPQSAVTPGQSAVFYLGEVCLGGGIIAERI.

ATP-binding positions include 30 to 37 (GMSGGVDS) and Met-56. Positions 116 to 118 (NPD) are interaction with target base in tRNA. The Nucleophile role is filled by Cys-121. A disulfide bridge links Cys-121 with Cys-218. Gly-146 lines the ATP pocket. The segment at 168-170 (KDQ) is interaction with tRNA. The active-site Cysteine persulfide intermediate is Cys-218. An interaction with tRNA region spans residues 330-331 (RY).

Belongs to the MnmA/TRMU family.

It is found in the cytoplasm. It catalyses the reaction S-sulfanyl-L-cysteinyl-[protein] + uridine(34) in tRNA + AH2 + ATP = 2-thiouridine(34) in tRNA + L-cysteinyl-[protein] + A + AMP + diphosphate + H(+). Catalyzes the 2-thiolation of uridine at the wobble position (U34) of tRNA, leading to the formation of s(2)U34. This Haemophilus influenzae (strain 86-028NP) protein is tRNA-specific 2-thiouridylase MnmA.